We begin with the raw amino-acid sequence, 371 residues long: NADH-ubiquinone oxidoreductase chain 1 (371 aa).

The next 10 helical transmembrane spans lie at 7 to 27 (IISI…VAYV), 44 to 64 (PNAV…KLLL), 77 to 97 (LFFL…AVIP), 109 to 129 (LGIL…LLAG), 153 to 173 (LVLS…NLGV), 180 to 200 (AVLF…GSIA), 226 to 246 (AVVF…MCIL), 263 to 283 (VFNI…NWMV), 302 to 322 (GWLY…IFIL), and 338 to 358 (FCWT…PCIL).

The protein belongs to the complex I subunit 1 family.

It localises to the mitochondrion inner membrane. It catalyses the reaction a ubiquinone + NADH + 5 H(+)(in) = a ubiquinol + NAD(+) + 4 H(+)(out). Core subunit of the mitochondrial membrane respiratory chain NADH dehydrogenase (Complex I) that is believed to belong to the minimal assembly required for catalysis. Complex I functions in the transfer of electrons from NADH to the respiratory chain. The immediate electron acceptor for the enzyme is believed to be ubiquinone. This chain is NADH-ubiquinone oxidoreductase chain 1 (ndh-1), found in Neurospora crassa (strain ATCC 24698 / 74-OR23-1A / CBS 708.71 / DSM 1257 / FGSC 987).